The chain runs to 193 residues: Potassium-transporting ATPase KdpC subunit (193 aa).

Residues 7 to 27 form a helical membrane-spanning segment; that stretch reads PLVVLFVVLNAVTGLAYPAVM.

It belongs to the KdpC family. In terms of assembly, the system is composed of three essential subunits: KdpA, KdpB and KdpC.

Its subcellular location is the cell inner membrane. In terms of biological role, part of the high-affinity ATP-driven potassium transport (or Kdp) system, which catalyzes the hydrolysis of ATP coupled with the electrogenic transport of potassium into the cytoplasm. This subunit acts as a catalytic chaperone that increases the ATP-binding affinity of the ATP-hydrolyzing subunit KdpB by the formation of a transient KdpB/KdpC/ATP ternary complex. The protein is Potassium-transporting ATPase KdpC subunit of Burkholderia cenocepacia (strain HI2424).